The primary structure comprises 225 residues: Uridylate kinase (225 aa).

Residue 9–10 (GS) coordinates ATP. G46 provides a ligand contact to UMP. Residues G47 and R51 each coordinate ATP. UMP contacts are provided by residues D67 and 115–121 (THPAHTT). ATP is bound by residues T141, N142, Y147, and D150.

This sequence belongs to the UMP kinase family. In terms of assembly, homohexamer.

Its subcellular location is the cytoplasm. The enzyme catalyses UMP + ATP = UDP + ADP. It participates in pyrimidine metabolism; CTP biosynthesis via de novo pathway; UDP from UMP (UMPK route): step 1/1. Inhibited by UTP. Catalyzes the reversible phosphorylation of UMP to UDP. The protein is Uridylate kinase of Methanococcus maripaludis (strain C5 / ATCC BAA-1333).